Consider the following 225-residue polypeptide: MTTAAIIVAAGRGTRAGGDLPKQWQPLAGRPVLAHTLAAFRAAAGVSRTLLVIHPDDRARAEALPGVAEGKVELVEGGASRDASVRNALEALAGAGIERVLIHDGARPLVAPGLIARTLAALETAPGAAPAVPVSDALWRGEGGRVVGTQDRTGLFRAQTPQAFRYEAILAAHRAHPGGAADDVEVARAAGLEVAIVEGCEDNLKVTYPGDFARAERLLALAAGL.

It belongs to the IspD/TarI cytidylyltransferase family. IspD subfamily.

The enzyme catalyses 2-C-methyl-D-erythritol 4-phosphate + CTP + H(+) = 4-CDP-2-C-methyl-D-erythritol + diphosphate. It functions in the pathway isoprenoid biosynthesis; isopentenyl diphosphate biosynthesis via DXP pathway; isopentenyl diphosphate from 1-deoxy-D-xylulose 5-phosphate: step 2/6. In terms of biological role, catalyzes the formation of 4-diphosphocytidyl-2-C-methyl-D-erythritol from CTP and 2-C-methyl-D-erythritol 4-phosphate (MEP). The chain is 2-C-methyl-D-erythritol 4-phosphate cytidylyltransferase from Cereibacter sphaeroides (strain ATCC 17029 / ATH 2.4.9) (Rhodobacter sphaeroides).